Here is a 421-residue protein sequence, read N- to C-terminus: Vinorine synthase (421 aa).

Residues histidine 160 and aspartate 362 each act as proton acceptor in the active site.

This sequence belongs to the plant acyltransferase family. In terms of assembly, monomer. Mainly expressed in roots and, to a lower level, in leaves.

The catalysed reaction is 16-epivellosimine + acetyl-CoA = vinorine + CoA. The protein operates within alkaloid biosynthesis; ajmaline biosynthesis. Its activity is regulated as follows. Complete inhibition by 4-(2-aminoethyl)-benzenesulfonyl fluoride (AEBSF), N-tosyl-L-phenylalanine chloromethylketone (TPCK), Hg(2+) and diethyl-pyrocarbonate (DEPC). 50% inhibition by N-(N-(L-3-trans-carboxirane-2-carbonyl)-L-leucyl)-agmanitine (E-64), N-alpha-p-tosyl-L-lysine chloromethylketone (TLCK) and phenylmethylsulfonyl fluoride (PMSF). Functionally, acetyltransferase involved in the biosynthesis of ajmaline-type monoterpenoid indole alkaloids (MIAs) natural products, important plant-derived pharmaceuticals used in the therapy of heart disorders. Catalyzes the conversion of 16-epivellosimine to vinorine, precursor of vomilenine, an intermediate chemical in the biosynthesis of ajmaline. Acts on gardneral, but not on polyneuridine aldehyde or N-methylgardneral. This is Vinorine synthase from Rauvolfia serpentina (Serpentine wood).